The sequence spans 155 residues: Small ribosomal subunit protein uS7c (155 aa).

It belongs to the universal ribosomal protein uS7 family. Part of the 30S ribosomal subunit.

The protein localises to the plastid. Its subcellular location is the chloroplast. Functionally, one of the primary rRNA binding proteins, it binds directly to 16S rRNA where it nucleates assembly of the head domain of the 30S subunit. The protein is Small ribosomal subunit protein uS7c (rps7) of Canella winterana (Wild cinnamon).